A 314-amino-acid chain; its full sequence is Taste receptor type 2 member 42 (314 aa).

Topologically, residues 1–7 (MATELDK) are extracellular. A helical membrane pass occupies residues 8-28 (IFLILAIAEFIISMLGNVFIG). Residues 29–50 (LVNCSEGIKNQKVFSADFILTC) lie on the Cytoplasmic side of the membrane. The chain crosses the membrane as a helical span at residues 51 to 71 (LAISTIGQLLVILFDSFLVGL). Residues 72–101 (ASHLYTTYRLGKTVIMLWHMTNHLTTWLAT) lie on the Extracellular side of the membrane. Residues 102-122 (CLSIFYFFKIAHFPHSLFLWL) traverse the membrane as a helical segment. Residues 123–127 (RWRMN) lie on the Cytoplasmic side of the membrane. A helical transmembrane segment spans residues 128–148 (GMIVMLLILSLFLLIFDSLVL). The Extracellular segment spans residues 149–187 (EIFIDISLNIIDKSNLTLYLDESKTLYDKLSILKTLLSL). N-linked (GlcNAc...) asparagine glycosylation occurs at Asn163. Residues 188 to 208 (TSFIPFSLFLTSLLFLFLSLV) form a helical membrane-spanning segment. The Cytoplasmic segment spans residues 209–238 (RHTRNLKLSSLGSRDSSTEAHRRAMKMVMS). A helical membrane pass occupies residues 239-259 (FLFLFIVHFFSLQVANWIFFM). Residues 260–265 (LWNNKC) lie on the Extracellular side of the membrane. The chain crosses the membrane as a helical span at residues 266 to 286 (IKFVMLALNAFPSCHSFILIL). The Cytoplasmic portion of the chain corresponds to 287–314 (GNSKLQQTAVRLLWHLRNYTKTPNPLPL).

This sequence belongs to the G-protein coupled receptor T2R family.

It is found in the membrane. Receptor that may play a role in the perception of bitterness and is gustducin-linked. May play a role in sensing the chemical composition of the gastrointestinal content. The activity of this receptor may stimulate alpha gustducin, mediate PLC-beta-2 activation and lead to the gating of TRPM5. The polypeptide is Taste receptor type 2 member 42 (TAS2R42) (Homo sapiens (Human)).